Consider the following 483-residue polypeptide: NADH-quinone oxidoreductase subunit N (483 aa).

Helical transmembrane passes span 9–29 (LVLPEVILGVSALVLLVWGAF), 35–55 (PLFTGAAVLALLGAAVAAVVG), 69–89 (AAATYAKVAIYLSSAVAIVLG), 104–124 (AVLVILAAVGMGVTASAGDLI), 158–178 (FVLGALSSGLLLYGASLIYGF), 201–221 (VGLLFGLVFLICGLAFKVSAA), 234–254 (APTSVVGFFAAAPKLAAMMMF), 272–292 (VLIIASLASVFVGAFAGLAQT), 297–317 (LWAYSSIANVGYALLGVATGG), 325–345 (LLFMTLYMVDVTGFFACLQAL), 368–388 (IAVAMTAFSLSALGMPPFSGF), 404–424 (VLLQWAAVLGLVGSVVAAFYY), and 449–469 (AVGFAAALFSFPVVMVALIWL).

It belongs to the complex I subunit 2 family. As to quaternary structure, NDH-1 is composed of 14 different subunits. Subunits NuoA, H, J, K, L, M, N constitute the membrane sector of the complex.

It localises to the cell inner membrane. It catalyses the reaction a quinone + NADH + 5 H(+)(in) = a quinol + NAD(+) + 4 H(+)(out). NDH-1 shuttles electrons from NADH, via FMN and iron-sulfur (Fe-S) centers, to quinones in the respiratory chain. The immediate electron acceptor for the enzyme in this species is believed to be ubiquinone. Couples the redox reaction to proton translocation (for every two electrons transferred, four hydrogen ions are translocated across the cytoplasmic membrane), and thus conserves the redox energy in a proton gradient. This Caulobacter sp. (strain K31) protein is NADH-quinone oxidoreductase subunit N.